The chain runs to 109 residues: Nucleoid-associated protein VS_0917 (109 aa).

2 disordered regions span residues Met1 to Gln22 and Gln88 to Phe109. The segment covering Asn9–Gln18 has biased composition (low complexity).

Belongs to the YbaB/EbfC family. In terms of assembly, homodimer.

Its subcellular location is the cytoplasm. It localises to the nucleoid. Functionally, binds to DNA and alters its conformation. May be involved in regulation of gene expression, nucleoid organization and DNA protection. This Vibrio atlanticus (strain LGP32) (Vibrio splendidus (strain Mel32)) protein is Nucleoid-associated protein VS_0917.